Reading from the N-terminus, the 1640-residue chain is Clathrin heavy chain 2 (1640 aa).

An N-acetylalanine modification is found at alanine 2. Positions 2–479 (AQILPVRFQE…TDPMLALSVY (478 aa)) are globular terminal domain. WD40-like repeat stretches follow at residues 24–67 (NIGF…RPIS), 68–107 (AESAIMNPASKVIALKAGKTLQIFNIEMKSKMKAHTMAEE), 108–149 (VIFW…TSLV), 150–195 (GCQV…QPIE), 196–257 (GHAA…PEAQ), 258–301 (NDFP…ISAD), and 302–330 (TIFVTAPHKPTSGIIGVNKKGQVLSVCVE). Residue serine 67 is modified to Phosphoserine. At tyrosine 184 the chain carries Phosphotyrosine. A Phosphothreonine modification is found at threonine 394. The tract at residues 449-465 (EKWLKEDKLECSEELGD) is binding site for the uncoating ATPase, involved in lattice disassembly. Positions 480-523 (LRANVPSKVIQCFAETGQFQKIVLYAKKVGYTPDWIFLLRGVMK) are flexible linker. Positions 524–634 (ISPEQGLQFS…QALEHYTDLY (111 aa)) are distal segment. Residues 524–1640 (ISPEQGLQFS…PLVFDFDGHE (1117 aa)) form a heavy chain arm region. CHCR repeat units follow at residues 537 to 683 (VQDE…QLCV), 686 to 828 (ASKY…SEEV), 833 to 972 (IMAV…QLID), 979 to 1124 (LSET…VKEA), 1128 to 1269 (YIRG…FRFA), 1274 to 1420 (LHIV…LLIN), and 1423 to 1566 (LLVL…RECF). At tyrosine 634 the chain carries Phosphotyrosine. The tract at residues 639–1640 (AVVHTHLLNP…PLVFDFDGHE (1002 aa)) is proximal segment. The residue at position 737 (lysine 737) is an N6-succinyllysine. Lysine 856 carries the post-translational modification N6-acetyllysine. Phosphotyrosine is present on tyrosine 899. A Phosphoserine modification is found at serine 1167. Phosphotyrosine is present on tyrosine 1206. The segment at 1213 to 1522 (AAKLLYSNVS…YLYKGNNWWA (310 aa)) is involved in binding clathrin light chain. Serine 1229 carries the phosphoserine modification. Lysine 1441 is modified (N6-acetyllysine; alternate). Position 1441 is an N6-succinyllysine; alternate (lysine 1441). A phosphotyrosine mark is found at tyrosine 1477 and tyrosine 1487. Residue serine 1494 is modified to Phosphoserine. An N6-acetyllysine modification is found at lysine 1501. The tract at residues 1551 to 1640 (QKLLQWFLEE…PLVFDFDGHE (90 aa)) is trimerization.

Belongs to the clathrin heavy chain family. As to quaternary structure, clathrin triskelions, composed of 3 heavy chains and 3 light chains, are the basic subunits of the clathrin coat. In the presence of light chains, hub assembly is influenced by both the pH and the concentration of calcium. May interact with OCRL. Interacts with AFTPH/aftiphilin. In terms of tissue distribution, maximal levels in skeletal muscle. High levels in heart and testis. Low expression detected in all other tissues.

It is found in the cytoplasmic vesicle membrane. Its subcellular location is the membrane. The protein resides in the coated pit. Clathrin is the major protein of the polyhedral coat of coated pits and vesicles. Two different adapter protein complexes link the clathrin lattice either to the plasma membrane or to the trans-Golgi network. The polypeptide is Clathrin heavy chain 2 (CLTCL1) (Homo sapiens (Human)).